Reading from the N-terminus, the 93-residue chain is Small ribosomal subunit protein uS19c (93 aa).

Belongs to the universal ribosomal protein uS19 family.

The protein localises to the plastid. It is found in the chloroplast. In terms of biological role, protein S19 forms a complex with S13 that binds strongly to the 16S ribosomal RNA. In Brachypodium distachyon (Purple false brome), this protein is Small ribosomal subunit protein uS19c.